The following is a 416-amino-acid chain: Gamma-glutamyl phosphate reductase (416 aa).

Belongs to the gamma-glutamyl phosphate reductase family.

It is found in the cytoplasm. The enzyme catalyses L-glutamate 5-semialdehyde + phosphate + NADP(+) = L-glutamyl 5-phosphate + NADPH + H(+). Its pathway is amino-acid biosynthesis; L-proline biosynthesis; L-glutamate 5-semialdehyde from L-glutamate: step 2/2. In terms of biological role, catalyzes the NADPH-dependent reduction of L-glutamate 5-phosphate into L-glutamate 5-semialdehyde and phosphate. The product spontaneously undergoes cyclization to form 1-pyrroline-5-carboxylate. This is Gamma-glutamyl phosphate reductase from Leptospira borgpetersenii serovar Hardjo-bovis (strain JB197).